Consider the following 366-residue polypeptide: Ferredoxin--NADP reductase (366 aa).

FAD contacts are provided by D51, Q59, Y64, V104, F139, D308, and T349.

This sequence belongs to the ferredoxin--NADP reductase type 2 family. As to quaternary structure, homodimer. The cofactor is FAD.

The catalysed reaction is 2 reduced [2Fe-2S]-[ferredoxin] + NADP(+) + H(+) = 2 oxidized [2Fe-2S]-[ferredoxin] + NADPH. The sequence is that of Ferredoxin--NADP reductase from Methylibium petroleiphilum (strain ATCC BAA-1232 / LMG 22953 / PM1).